Reading from the N-terminus, the 350-residue chain is Transmembrane protein 185B (350 aa).

A run of 7 helical transmembrane segments spans residues 16-36 (LIYA…DGVI), 41-61 (WAVF…ASVG), 81-101 (FKAM…EVLV), 111-131 (FWLL…AACV), 168-188 (WLVV…VVLY), 211-231 (VTMA…EVLL), and 240-260 (MFSY…LMAT).

It belongs to the TMEM185 family.

It localises to the membrane. This chain is Transmembrane protein 185B (TMEM185B), found in Bos taurus (Bovine).